A 164-amino-acid polypeptide reads, in one-letter code: Nucleotide-binding protein Daro_3028 (164 aa).

It belongs to the YajQ family.

Its function is as follows. Nucleotide-binding protein. This is Nucleotide-binding protein Daro_3028 from Dechloromonas aromatica (strain RCB).